The chain runs to 470 residues: Ribulose bisphosphate carboxylase large chain (470 aa).

Substrate contacts are provided by N115 and T165. Residue K167 is the Proton acceptor of the active site. K169 contributes to the substrate binding site. Residues K193, D195, and E196 each coordinate Mg(2+). N6-carboxylysine is present on K193. H286 serves as the catalytic Proton acceptor. Residues R287, H319, and S371 each contribute to the substrate site.

The protein belongs to the RuBisCO large chain family. Type I subfamily. As to quaternary structure, heterohexadecamer of 8 large chains and 8 small chains. It depends on Mg(2+) as a cofactor.

The protein resides in the carboxysome. The catalysed reaction is 2 (2R)-3-phosphoglycerate + 2 H(+) = D-ribulose 1,5-bisphosphate + CO2 + H2O. The enzyme catalyses D-ribulose 1,5-bisphosphate + O2 = 2-phosphoglycolate + (2R)-3-phosphoglycerate + 2 H(+). In terms of biological role, ruBisCO catalyzes two reactions: the carboxylation of D-ribulose 1,5-bisphosphate, the primary event in carbon dioxide fixation, as well as the oxidative fragmentation of the pentose substrate in the photorespiration process. Both reactions occur simultaneously and in competition at the same active site. The chain is Ribulose bisphosphate carboxylase large chain from Prochlorococcus marinus (strain SARG / CCMP1375 / SS120).